Consider the following 35-residue polypeptide: Photosystem II reaction center protein T (35 aa).

A helical membrane pass occupies residues 3 to 23 (ALVYTFLLVSTLGIIFFAIFF).

This sequence belongs to the PsbT family. In terms of assembly, PSII is composed of 1 copy each of membrane proteins PsbA, PsbB, PsbC, PsbD, PsbE, PsbF, PsbH, PsbI, PsbJ, PsbK, PsbL, PsbM, PsbT, PsbY, PsbZ, Psb30/Ycf12, at least 3 peripheral proteins of the oxygen-evolving complex and a large number of cofactors. It forms dimeric complexes.

Its subcellular location is the plastid. The protein resides in the chloroplast thylakoid membrane. In terms of biological role, found at the monomer-monomer interface of the photosystem II (PS II) dimer, plays a role in assembly and dimerization of PSII. PSII is a light-driven water plastoquinone oxidoreductase, using light energy to abstract electrons from H(2)O, generating a proton gradient subsequently used for ATP formation. This Ceratophyllum demersum (Rigid hornwort) protein is Photosystem II reaction center protein T.